The primary structure comprises 392 residues: Nucleolysin TIAR (392 aa).

RRM domains follow at residues Arg-9–Thr-102 and Phe-114–Arg-192. At Lys-139 the chain carries N6-acetyllysine. Ser-218 bears the Phosphoserine mark. Residues Cys-222 to Glu-294 enclose the RRM 3 domain. The disordered stretch occupies residues Gly-363–Gln-392. The segment covering Gly-369–Asn-380 has biased composition (pro residues).

In terms of assembly, interacts with FASTK. Phosphorylated by MAPK14 following DNA damage, releasing TIAR from GADD45A mRNA. As to expression, expressed both in primordial germ cells (PGCs) and in neighboring somatic cells.

It localises to the nucleus. The protein localises to the cytoplasm. The protein resides in the stress granule. It is found in the cytolytic granule. Its function is as follows. RNA-binding protein involved in alternative pre-RNA splicing and in cytoplasmic stress granules formation. Shows a preference for uridine-rich RNAs. Activates splicing of alternative exons with weak 5' splice sites followed by a U-rich stretch on its own pre-mRNA and on TIA1 mRNA. Promotes the inclusion of TIA1 exon 5 to give rise to the long isoform (isoform a) of TIA1. Acts downstream of the stress-induced phosphorylation of EIF2S1/EIF2A to promote the recruitment of untranslated mRNAs to cytoplasmic stress granules (SG). Possesses nucleolytic activity against cytotoxic lymphocyte target cells. May be involved in apoptosis. This is Nucleolysin TIAR (Tial1) from Mus musculus (Mouse).